Reading from the N-terminus, the 387-residue chain is Arrestin-C (387 aa).

Belongs to the arrestin family. In terms of tissue distribution, retina and pineal gland.

May play a role in an as yet undefined retina-specific signal transduction. Could bind to photoactivated-phosphorylated red/green opsins. This Xenopus laevis (African clawed frog) protein is Arrestin-C (arr3).